The primary structure comprises 314 residues: tRNA dimethylallyltransferase 1 (314 aa).

Residue 8 to 15 coordinates ATP; it reads GPTGTGKS. 10–15 contributes to the substrate binding site; that stretch reads TGTGKS.

The protein belongs to the IPP transferase family. As to quaternary structure, monomer. It depends on Mg(2+) as a cofactor.

It catalyses the reaction adenosine(37) in tRNA + dimethylallyl diphosphate = N(6)-dimethylallyladenosine(37) in tRNA + diphosphate. Functionally, catalyzes the transfer of a dimethylallyl group onto the adenine at position 37 in tRNAs that read codons beginning with uridine, leading to the formation of N6-(dimethylallyl)adenosine (i(6)A). The sequence is that of tRNA dimethylallyltransferase 1 from Mycobacterium marinum (strain ATCC BAA-535 / M).